We begin with the raw amino-acid sequence, 448 residues long: SET domain-containing protein SmydA-8, isoform B (448 aa).

Residues 42–273 (PSWRVADSPI…AGAEITMSYA (232 aa)) form the SET domain.

It belongs to the class V-like SAM-binding methyltransferase superfamily.

This chain is SET domain-containing protein SmydA-8, isoform B, found in Drosophila melanogaster (Fruit fly).